The sequence spans 227 residues: PKHD-type hydroxylase Bcep18194_B0892 (227 aa).

In terms of domain architecture, Fe2OG dioxygenase spans 78–178 (KVFPPLFNRY…RVASFFWIQS (101 aa)). The Fe cation site is built by histidine 96, aspartate 98, and histidine 159. Arginine 169 serves as a coordination point for 2-oxoglutarate.

It depends on Fe(2+) as a cofactor. Requires L-ascorbate as cofactor.

This chain is PKHD-type hydroxylase Bcep18194_B0892, found in Burkholderia lata (strain ATCC 17760 / DSM 23089 / LMG 22485 / NCIMB 9086 / R18194 / 383).